The following is a 182-amino-acid chain: Inner membrane assembly complex subunit 17 (182 aa).

A mitochondrion-targeting transit peptide spans 1-45; sequence MLKRRSNALITLSRTKLFPITTVAYYHRRLLNQQRRAVSTSPKKE. Residues 46-107 are Mitochondrial matrix-facing; sequence IKSLEDLANL…EIPVKRFIRP (62 aa). A helical transmembrane segment spans residues 108–127; the sequence is LWMFILMGSSVYLLLHFSWW. A coiled-coil region spans residues 128 to 158; the sequence is KLEHEERESQLKKEVEILEHQLNELIIQDKT. The Mitochondrial intermembrane portion of the chain corresponds to 128-182; that stretch reads KLEHEERESQLKKEVEILEHQLNELIIQDKTHNTSRGKGSNESTHMKPWYRRWFW.

Belongs to the INA17 family. As to quaternary structure, component of the inner membrane assembly (INA) complex, composed of INA17 and INA22. Interacts with a subset of F(1)F(0)-ATP synthase subunits of the F(1)-domain and the peripheral stalk.

The protein localises to the mitochondrion inner membrane. Component of the INA complex (INAC) that promotes the biogenesis of mitochondrial F(1)F(0)-ATP synthase. INAC facilitates the assembly of the peripheral stalk and promotes the assembly of the catalytic F(1)-domain with the membrane-embedded F(0)-domain. This Saccharomyces cerevisiae (strain YJM789) (Baker's yeast) protein is Inner membrane assembly complex subunit 17.